The following is a 150-amino-acid chain: SsrA-binding protein (150 aa).

A disordered region spans residues 129 to 150 (KRQTLKSKEADREMARALRDRH).

Belongs to the SmpB family.

It is found in the cytoplasm. Its function is as follows. Required for rescue of stalled ribosomes mediated by trans-translation. Binds to transfer-messenger RNA (tmRNA), required for stable association of tmRNA with ribosomes. tmRNA and SmpB together mimic tRNA shape, replacing the anticodon stem-loop with SmpB. tmRNA is encoded by the ssrA gene; the 2 termini fold to resemble tRNA(Ala) and it encodes a 'tag peptide', a short internal open reading frame. During trans-translation Ala-aminoacylated tmRNA acts like a tRNA, entering the A-site of stalled ribosomes, displacing the stalled mRNA. The ribosome then switches to translate the ORF on the tmRNA; the nascent peptide is terminated with the 'tag peptide' encoded by the tmRNA and targeted for degradation. The ribosome is freed to recommence translation, which seems to be the essential function of trans-translation. This is SsrA-binding protein from Syntrophotalea carbinolica (strain DSM 2380 / NBRC 103641 / GraBd1) (Pelobacter carbinolicus).